The following is a 36-amino-acid chain: YFAADGSVVPSISDWNLWVPLGILGIPTIWIALTYR.

One of the components of the bacteriochlorophyll-protein complex in the chromatophore membrane. The chain is Light-harvesting protein B-1015 gamma chain from Blastochloris viridis (Rhodopseudomonas viridis).